A 502-amino-acid chain; its full sequence is Alpha-ketoglutarate-dependent dioxygenase FTO (502 aa).

Positions 32 to 324 (TPKDDEFYQQ…SSTHRVAECS (293 aa)) are fe2OG dioxygenase domain. Arg-96 and Tyr-108 together coordinate substrate. Asn-202 contributes to the 2-oxoglutarate binding site. The interval 210–221 (PYLKEEPYFGMG) is loop L1; predicted to block binding of double-stranded DNA or RNA. The residue at position 213 (Lys-213) is an N6-acetyllysine. Fe cation contacts are provided by His-228 and Asp-230. Residue 228-231 (HHDE) participates in substrate binding. Tyr-292 is a 2-oxoglutarate binding site. Residue His-304 participates in Fe cation binding. Residues 313-315 (RFS), Thr-317, and Arg-319 each bind 2-oxoglutarate.

It belongs to the fto family. In terms of assembly, monomer. May also exist as homodimer. Fe(2+) is required as a cofactor. As to expression, ubiquitous. Highly expressed in teeth and weakly in bone.

The protein resides in the nucleus. Its subcellular location is the nucleus speckle. It is found in the cytoplasm. It carries out the reaction a 5'-end (N(7)-methyl 5'-triphosphoguanosine)-(N(6),2'-O-dimethyladenosine) in mRNA + 2-oxoglutarate + O2 = a 5'-end (N(7)-methyl 5'-triphosphoguanosine)-(2'-O-methyladenosine) in mRNA + formaldehyde + succinate + CO2. The catalysed reaction is an N(6)-methyladenosine in mRNA + 2-oxoglutarate + O2 = an adenosine in mRNA + formaldehyde + succinate + CO2. The enzyme catalyses N(6)-methyladenosine in U6 snRNA + 2-oxoglutarate + O2 = adenosine in U6 snRNA + formaldehyde + succinate + CO2. It catalyses the reaction a 5'-end (N(7)-methyl 5'-triphosphoguanosine)-(N(6),2'-O-dimethyladenosine) in U6 snRNA + 2-oxoglutarate + O2 = a 5'-end (N(7)-methyl 5'-triphosphoguanosine)-(2'-O-methyladenosine) in U6 snRNA + formaldehyde + succinate + CO2. It carries out the reaction an N(1)-methyladenosine in tRNA + 2-oxoglutarate + O2 = an adenosine in tRNA + formaldehyde + succinate + CO2. Activated by ascorbate. Inhibited by N-oxalylglycine, fumarate and succinate. Functionally, RNA demethylase that mediates oxidative demethylation of different RNA species, such as mRNAs, tRNAs and snRNAs, and acts as a regulator of fat mass, adipogenesis and energy homeostasis. Specifically demethylates N(6)-methyladenosine (m6A) RNA, the most prevalent internal modification of messenger RNA (mRNA) in higher eukaryotes. M6A demethylation by FTO affects mRNA expression and stability. Also able to demethylate m6A in U6 small nuclear RNA (snRNA). Mediates demethylation of N(6),2'-O-dimethyladenosine cap (m6A(m)), by demethylating the N(6)-methyladenosine at the second transcribed position of mRNAs and U6 snRNA. Demethylation of m6A(m) in the 5'-cap by FTO affects mRNA stability by promoting susceptibility to decapping. Also acts as a tRNA demethylase by removing N(1)-methyladenine from various tRNAs. Has no activity towards 1-methylguanine. Has no detectable activity towards double-stranded DNA. Also able to repair alkylated DNA and RNA by oxidative demethylation: demethylates single-stranded RNA containing 3-methyluracil, single-stranded DNA containing 3-methylthymine and has low demethylase activity towards single-stranded DNA containing 1-methyladenine or 3-methylcytosine. Ability to repair alkylated DNA and RNA is however unsure in vivo. Involved in the regulation of fat mass, adipogenesis and body weight, thereby contributing to the regulation of body size and body fat accumulation. Involved in the regulation of thermogenesis and the control of adipocyte differentiation into brown or white fat cells. Regulates activity of the dopaminergic midbrain circuitry via its ability to demethylate m6A in mRNAs. This chain is Alpha-ketoglutarate-dependent dioxygenase FTO, found in Rattus norvegicus (Rat).